The primary structure comprises 85 residues: Latartoxin-1a (85 aa).

Residues 1–19 form the signal peptide; the sequence is MKVLVFAIVCSVLLQVVLS. Residues 20–25 constitute a propeptide, removed in mature form; the sequence is ADEEAR. The Processing quadruplet motif motif lies at 22–25; the sequence is EEAR. 4 cysteine pairs are disulfide-bonded: Cys-27-Cys-42, Cys-34-Cys-47, Cys-41-Cys-64, and Cys-49-Cys-62.

The protein belongs to the neurotoxin 19 (CSTX) family. In terms of processing, contains 4 disulfide bonds. Post-translationally, cleavage of the propeptide depends on the processing quadruplet motif (XXXR, with at least one of X being E). Expressed by the venom gland.

It is found in the secreted. Its function is as follows. Insect toxin. Causes paralysis in larvae of C.vicina by depolarizing membranes at the neuromuscular junction. The chain is Latartoxin-1a from Lachesana tarabaevi (Spider).